A 397-amino-acid chain; its full sequence is ATP phosphoribosyltransferase regulatory subunit (397 aa).

This sequence belongs to the class-II aminoacyl-tRNA synthetase family. HisZ subfamily. As to quaternary structure, heteromultimer composed of HisG and HisZ subunits.

It is found in the cytoplasm. It participates in amino-acid biosynthesis; L-histidine biosynthesis; L-histidine from 5-phospho-alpha-D-ribose 1-diphosphate: step 1/9. Its function is as follows. Required for the first step of histidine biosynthesis. May allow the feedback regulation of ATP phosphoribosyltransferase activity by histidine. The polypeptide is ATP phosphoribosyltransferase regulatory subunit (Nitrosococcus oceani (strain ATCC 19707 / BCRC 17464 / JCM 30415 / NCIMB 11848 / C-107)).